Consider the following 365-residue polypeptide: MSDEIVTNKSVTYVNNTTPVTITSSELDLRSCYQDDEVVIEVHAAALNPIDFITHQLCNSYIFGKYPKTYSRDYSGVIIKAGKDVDNRWKVGDKVNGMYSHIYGERGTLTHYLILNPAKDVPITHMVEVPKDENDPYDDFVYAAAWPLTFGTAFSTLYDFKKDWTSDSKVLVIGASTSVSYAFVHIAKNYFNIGTVVGICSKNSIERNKKLGYDYLVPYDEGSIVENVKKLKQSVLENDKFDMIFDSVGNHDFFPVIDQFLKPKAKNSFYVTIAGNNKADYKNISWRDFVSLSSILKAINPFKKYNWRFGHPYPPNNFIEVGNEMIKKGTYKPPIDSVYEFDQYKEAIDRLMSNRAKGKVVVKMK.

The protein belongs to the YIM1 family.

Its subcellular location is the lipid droplet. It localises to the mitochondrion. This is Protein YIM1 (YIM1) from Saccharomyces cerevisiae (strain ATCC 204508 / S288c) (Baker's yeast).